Consider the following 840-residue polypeptide: Mechanosensitive ion channel protein Msy2 (840 aa).

Residues Met-1–Arg-68 are Cytoplasmic-facing. The chain crosses the membrane as a helical span at residues Trp-69–Ser-89. Residues Pro-90–Arg-100 lie on the Lumenal side of the membrane. Residues Ile-101–Ile-121 traverse the membrane as a helical segment. At Ala-122–Pro-126 the chain is on the cytoplasmic side. The chain crosses the membrane as a helical span at residues Tyr-127–Leu-147. Topologically, residues Thr-148 to Glu-151 are lumenal. The chain crosses the membrane as a helical span at residues Met-152 to Ile-172. The Cytoplasmic segment spans residues Gly-173–Gly-225. Residues Ala-226–Phe-246 traverse the membrane as a helical segment. The Lumenal segment spans residues His-247–Gly-449. In terms of domain architecture, EF-hand spans Ile-392–Glu-427. A helical membrane pass occupies residues Leu-450–Ala-491. Residues Gln-492–Tyr-840 are Cytoplasmic-facing. 2 disordered regions span residues Glu-677–Asp-730 and Glu-775–Ala-819. Residues Ser-688 to Ser-700 show a composition bias toward low complexity. Over residues Ser-708–Asp-730 the composition is skewed to basic and acidic residues. Positions Ser-776–Ala-819 are enriched in low complexity.

Belongs to the MscS (TC 1.A.23) family.

It is found in the endoplasmic reticulum membrane. Its function is as follows. Regulates intracellular calcium levels and cell volume for survival in response to hypo-osmotic shock. Involved in maintaining vacuole integrity and protecting the nuclear envelope upon hypo-osmotic shock. The sequence is that of Mechanosensitive ion channel protein Msy2 from Schizosaccharomyces pombe (strain 972 / ATCC 24843) (Fission yeast).